Reading from the N-terminus, the 237-residue chain is N-(5'-phosphoribosyl)anthranilate isomerase (237 aa).

Belongs to the TrpF family.

It catalyses the reaction N-(5-phospho-beta-D-ribosyl)anthranilate = 1-(2-carboxyphenylamino)-1-deoxy-D-ribulose 5-phosphate. The protein operates within amino-acid biosynthesis; L-tryptophan biosynthesis; L-tryptophan from chorismate: step 3/5. This Desulfitobacterium hafniense (strain DSM 10664 / DCB-2) protein is N-(5'-phosphoribosyl)anthranilate isomerase.